The following is a 449-amino-acid chain: Phosphoglucosamine mutase (449 aa).

Ser105 acts as the Phosphoserine intermediate in catalysis. Mg(2+)-binding residues include Ser105, Asp242, Asp244, and Asp246. Position 105 is a phosphoserine (Ser105).

The protein belongs to the phosphohexose mutase family. Mg(2+) is required as a cofactor. In terms of processing, activated by phosphorylation.

It carries out the reaction alpha-D-glucosamine 1-phosphate = D-glucosamine 6-phosphate. In terms of biological role, catalyzes the conversion of glucosamine-6-phosphate to glucosamine-1-phosphate. The protein is Phosphoglucosamine mutase of Clavibacter sepedonicus (Clavibacter michiganensis subsp. sepedonicus).